We begin with the raw amino-acid sequence, 273 residues long: 2,3,4,5-tetrahydropyridine-2,6-dicarboxylate N-succinyltransferase (273 aa).

Substrate contacts are provided by Arg104 and Asp141.

Belongs to the transferase hexapeptide repeat family. As to quaternary structure, homotrimer.

It is found in the cytoplasm. It catalyses the reaction (S)-2,3,4,5-tetrahydrodipicolinate + succinyl-CoA + H2O = (S)-2-succinylamino-6-oxoheptanedioate + CoA. The protein operates within amino-acid biosynthesis; L-lysine biosynthesis via DAP pathway; LL-2,6-diaminopimelate from (S)-tetrahydrodipicolinate (succinylase route): step 1/3. The protein is 2,3,4,5-tetrahydropyridine-2,6-dicarboxylate N-succinyltransferase of Neisseria meningitidis serogroup A / serotype 4A (strain DSM 15465 / Z2491).